The following is a 140-amino-acid chain: Nucleoside diphosphate kinase (140 aa).

Residues Lys11, Phe59, Arg87, Thr93, Arg104, and Asn114 each coordinate ATP. His117 serves as the catalytic Pros-phosphohistidine intermediate.

The protein belongs to the NDK family. As to quaternary structure, homotetramer. Mg(2+) is required as a cofactor.

The protein localises to the cytoplasm. The enzyme catalyses a 2'-deoxyribonucleoside 5'-diphosphate + ATP = a 2'-deoxyribonucleoside 5'-triphosphate + ADP. It catalyses the reaction a ribonucleoside 5'-diphosphate + ATP = a ribonucleoside 5'-triphosphate + ADP. Functionally, major role in the synthesis of nucleoside triphosphates other than ATP. The ATP gamma phosphate is transferred to the NDP beta phosphate via a ping-pong mechanism, using a phosphorylated active-site intermediate. This Persephonella marina (strain DSM 14350 / EX-H1) protein is Nucleoside diphosphate kinase.